The chain runs to 902 residues: Respiratory nitrate reductase alpha chain (902 aa).

[4Fe-4S] cluster-binding residues include H29, C33, and C37.

It belongs to the prokaryotic molybdopterin-containing oxidoreductase family. Heterotrimer composed of an alpha, a beta and a gamma chain. Alpha and beta are catalytic chains; gamma chains are involved in binding the enzyme complex to the cytoplasmic membrane. Requires [4Fe-4S] cluster as cofactor. It depends on Mo-bis(molybdopterin guanine dinucleotide) as a cofactor.

It localises to the cell membrane. The protein localises to the cytoplasm. It carries out the reaction nitrate + a quinol = a quinone + nitrite + H2O. Its activity is regulated as follows. Inhibited by micromolar concentrations of azide. In terms of biological role, the nitrate reductase enzyme complex allows Bradyrhizobium sp. USDA 3045 to use nitrate as an electron acceptor during anaerobic growth. The alpha chain is the actual site of nitrate reduction. In Bradyrhizobium sp, this protein is Respiratory nitrate reductase alpha chain (narG).